A 460-amino-acid chain; its full sequence is Ammonium transporter Rh type B-B (460 aa).

At 1 to 10 the chain is on the cytoplasmic side; it reads MTSYSTNMRI. The chain crosses the membrane as a helical span at residues 11–31; sequence KLPLFCLLLQFITIILFAVFV. Residues 32 to 62 lie on the Extracellular side of the membrane; it reads RYDHESDARGWHEELNNHSSSNADNDFYYRY. Asparagine 48 carries N-linked (GlcNAc...) asparagine glycosylation. A helical transmembrane segment spans residues 63–83; that stretch reads PSFQDVHVMIFIGFGFLMTFL. Residues 84–87 lie on the Cytoplasmic side of the membrane; the sequence is KRYG. A helical membrane pass occupies residues 88-108; that stretch reads FSSVAFNFLIAAFGLQWSTLI. Residues 109 to 125 lie on the Extracellular side of the membrane; that stretch reads QGFFHGFHDGKIHVGIE. Residues 126–146 traverse the membrane as a helical segment; the sequence is SMINADFCTGAVLISFGAVLG. The Cytoplasmic portion of the chain corresponds to 147-150; sequence KTSP. The chain crosses the membrane as a helical span at residues 151 to 171; it reads VQLIIMTLVEVTLFGINEYII. At 172 to 179 the chain is on the extracellular side; it reads LNIVGAKD. The helical transmembrane segment at 180–202 threads the bilayer; that stretch reads AGGSMTIHTFGAYFGLIVSRVLY. Topologically, residues 203 to 220 are cytoplasmic; it reads REDLEKSRQREGSVYHSD. The helical transmembrane segment at 221–241 threads the bilayer; the sequence is LFAMIGTIYLWMFWPSFNSAV. Residues 242–252 are Extracellular-facing; it reads TAHGDDQHRTV. A helical transmembrane segment spans residues 253 to 273; it reads MNTYYSLAACTLATFGFSALL. Over 274-283 the chain is Cytoplasmic; sequence NGEGKLDMVH. A helical transmembrane segment spans residues 284-304; the sequence is IQNAALAGGVAVGTSGEMMLT. A topological domain (extracellular) is located at residue proline 305. The chain crosses the membrane as a helical span at residues 306–326; the sequence is FGAMIAGTLAGMISVLGYKYL. Over 327-347 the chain is Cytoplasmic; it reads TPVLDSKLKIQDTCGVHNLHG. A helical membrane pass occupies residues 348–368; the sequence is MPGILGAIIGAIVALFATADI. At 369–394 the chain is on the extracellular side; that stretch reads YGDGMGDVFPLISDGSRTAKQQSLYQ. The helical transmembrane segment at 395-415 threads the bilayer; the sequence is FLALLVALGFAIIGGTVVGFI. Residues 416 to 460 are Cytoplasmic-facing; the sequence is LKLPIFGTPSDAECFEDAIYWEVPGGEGHQQLTVVINNEDPDTQA.

This sequence belongs to the ammonium transporter (TC 2.A.49) family. Rh subfamily.

It localises to the basolateral cell membrane. The protein resides in the cytoplasmic vesicle membrane. Functions as a specific ammonium transporter. This is Ammonium transporter Rh type B-B (rhbg-b) from Xenopus laevis (African clawed frog).